The sequence spans 323 residues: tRNA U34 carboxymethyltransferase (323 aa).

Carboxy-S-adenosyl-L-methionine contacts are provided by residues Lys-91, Trp-105, Lys-110, Gly-130, Asp-152–Thr-154, Ile-181–Glu-182, Met-196, Tyr-200, and Arg-315.

The protein belongs to the class I-like SAM-binding methyltransferase superfamily. CmoB family. In terms of assembly, homotetramer.

It carries out the reaction carboxy-S-adenosyl-L-methionine + 5-hydroxyuridine(34) in tRNA = 5-carboxymethoxyuridine(34) in tRNA + S-adenosyl-L-homocysteine + H(+). Functionally, catalyzes carboxymethyl transfer from carboxy-S-adenosyl-L-methionine (Cx-SAM) to 5-hydroxyuridine (ho5U) to form 5-carboxymethoxyuridine (cmo5U) at position 34 in tRNAs. The sequence is that of tRNA U34 carboxymethyltransferase from Salmonella enteritidis PT4 (strain P125109).